The following is a 44-amino-acid chain: Keratin-associated protein 20-3 (44 aa).

It belongs to the KRTAP type 20 family. Interacts with hair keratins.

Its function is as follows. In the hair cortex, hair keratin intermediate filaments are embedded in an interfilamentous matrix, consisting of hair keratin-associated proteins (KRTAP), which are essential for the formation of a rigid and resistant hair shaft through their extensive disulfide bond cross-linking with abundant cysteine residues of hair keratins. The matrix proteins include the high-sulfur and high-glycine-tyrosine keratins. The protein is Keratin-associated protein 20-3 (KRTAP20-3) of Homo sapiens (Human).